Here is a 514-residue protein sequence, read N- to C-terminus: Beta-glucosidase 21 (514 aa).

Residues 1–25 form the signal peptide; it reads MERPLHLLLVFLSSPWLLLLQGVSS. Residues Gln-47 and His-147 each contribute to the a beta-D-glucoside site. Glu-193 (proton donor) is an active-site residue. A disulfide bridge links Cys-212 with Cys-220. Residues Asn-219 and Asn-224 are each glycosylated (N-linked (GlcNAc...) asparagine). Tyr-336 and Glu-406 together coordinate a beta-D-glucoside. The active-site Nucleophile is the Glu-406. Asn-407 carries an N-linked (GlcNAc...) asparagine glycan. Residues Trp-448 and Phe-465 each coordinate a beta-D-glucoside. Residue Asn-494 is glycosylated (N-linked (GlcNAc...) asparagine).

The protein belongs to the glycosyl hydrolase 1 family.

It catalyses the reaction Hydrolysis of terminal, non-reducing beta-D-glucosyl residues with release of beta-D-glucose.. The sequence is that of Beta-glucosidase 21 (BGLU21) from Oryza sativa subsp. japonica (Rice).